The primary structure comprises 432 residues: UDP-N-acetylglucosamine 1-carboxyvinyltransferase (432 aa).

A phosphoenolpyruvate-binding site is contributed by 22–23 (KN). R101 lines the UDP-N-acetyl-alpha-D-glucosamine pocket. The active-site Proton donor is C125. C125 carries the post-translational modification 2-(S-cysteinyl)pyruvic acid O-phosphothioketal. UDP-N-acetyl-alpha-D-glucosamine-binding positions include 130–134 (RPVDL), D315, and I337.

It belongs to the EPSP synthase family. MurA subfamily.

It localises to the cytoplasm. It catalyses the reaction phosphoenolpyruvate + UDP-N-acetyl-alpha-D-glucosamine = UDP-N-acetyl-3-O-(1-carboxyvinyl)-alpha-D-glucosamine + phosphate. The protein operates within cell wall biogenesis; peptidoglycan biosynthesis. In terms of biological role, cell wall formation. Adds enolpyruvyl to UDP-N-acetylglucosamine. The polypeptide is UDP-N-acetylglucosamine 1-carboxyvinyltransferase (Paramagnetospirillum magneticum (strain ATCC 700264 / AMB-1) (Magnetospirillum magneticum)).